Consider the following 464-residue polypeptide: Sulfoacetaldehyde dehydrogenase (acylating) (464 aa).

The active-site Nucleophile is cysteine 241.

The protein belongs to the aldehyde dehydrogenase family.

It catalyses the reaction sulfoacetaldehyde + NADP(+) + CoA = sulfoacetyl-CoA + NADPH + H(+). Functionally, involved in the degradation of sulfoacetate. Catalyzes the conversion of sulfoacetyl-CoA and NADPH to sulfoacetaldehyde, CoA and NADP(+). A much lower level of activity (1%) is observed when NADP(+) is replaced with NAD(+). The protein is Sulfoacetaldehyde dehydrogenase (acylating) of Bilophila wadsworthia (strain 3_1_6).